The primary structure comprises 1035 residues: Cell-division control histidine kinase PdhS (1035 aa).

The interval 1–613 (MSGSYPFIDI…HADGSEEPVD (613 aa)) is important for polar localization. A disordered region spans residues 500–533 (QGLANTRAESETPVSETSSIEPVEPTPPVKTRSE). The interaction with DivK stretch occupies residues 614 to 1035 (AHLNAIAWRG…VFPPTRVLAD (422 aa)). Positions 659 to 730 (HVEELKTILD…YLHGLSGNGV (72 aa)) constitute a PAS domain. Residues 802-1031 (RISHEIRTPL…VVEIVFPPTR (230 aa)) enclose the Histidine kinase domain. The residue at position 805 (His-805) is a Phosphohistidine; by autocatalysis.

Interacts with DivK.

Its subcellular location is the cytoplasm. The catalysed reaction is ATP + protein L-histidine = ADP + protein N-phospho-L-histidine.. Its function is as follows. Functions as a polar differentiation marker. Essential protein that, by localizing in the old pole of dividing cells, controls cell division and maturation, probably through control of DivK phosphorylation status and cellular distribution, which in turn regulates CtrA, a transcriptional regulator of the minB operon. The asymmetrical localization of this protein is probably required for cells to enter a new division cycle. In Brucella suis biovar 1 (strain 1330), this protein is Cell-division control histidine kinase PdhS (pdhS).